Consider the following 391-residue polypeptide: Chorismate synthase (391 aa).

NADP(+) is bound by residues Arg39 and Arg45. FMN contacts are provided by residues 133–135 (RAS), 254–255 (QA), Gly299, 314–318 (KPIAT), and Arg340.

It belongs to the chorismate synthase family. In terms of assembly, homotetramer. It depends on FMNH2 as a cofactor.

It carries out the reaction 5-O-(1-carboxyvinyl)-3-phosphoshikimate = chorismate + phosphate. It participates in metabolic intermediate biosynthesis; chorismate biosynthesis; chorismate from D-erythrose 4-phosphate and phosphoenolpyruvate: step 7/7. Catalyzes the anti-1,4-elimination of the C-3 phosphate and the C-6 proR hydrogen from 5-enolpyruvylshikimate-3-phosphate (EPSP) to yield chorismate, which is the branch point compound that serves as the starting substrate for the three terminal pathways of aromatic amino acid biosynthesis. This reaction introduces a second double bond into the aromatic ring system. This chain is Chorismate synthase, found in Symbiobacterium thermophilum (strain DSM 24528 / JCM 14929 / IAM 14863 / T).